We begin with the raw amino-acid sequence, 557 residues long: ADP-ribosylation factor-binding protein GGA1 (557 aa).

One can recognise a VHS domain in the interval 29 to 165; that stretch reads ACRSTLPEPD…LLKYKGYTFP (137 aa). The GAT domain occupies 192-317; sequence ERAQAAKLEE…LLKRYKSIKG (126 aa). Thr-348 is subject to Phosphothreonine. Phosphoserine occurs at positions 353, 357, 378, and 394. The 117-residue stretch at 440–556 folds into the GAE domain; the sequence is AQSQRHILNQ…EESGTTSLPT (117 aa).

Binds to ARF1 and ARF2.

The protein resides in the golgi apparatus. The protein localises to the trans-Golgi network. Functionally, may play a role in the regulation of membrane traffic through the trans-Golgi network. The chain is ADP-ribosylation factor-binding protein GGA1 (GGA1) from Saccharomyces cerevisiae (strain ATCC 204508 / S288c) (Baker's yeast).